The chain runs to 436 residues: UDP-N-acetylglucosamine 1-carboxyvinyltransferase 1 (436 aa).

22-23 (KN) is a binding site for phosphoenolpyruvate. Residue arginine 93 coordinates UDP-N-acetyl-alpha-D-glucosamine. The active-site Proton donor is the cysteine 117. Cysteine 117 carries the post-translational modification 2-(S-cysteinyl)pyruvic acid O-phosphothioketal. UDP-N-acetyl-alpha-D-glucosamine contacts are provided by residues 122 to 126 (RPIDQ), aspartate 306, and valine 328.

Belongs to the EPSP synthase family. MurA subfamily.

It is found in the cytoplasm. It catalyses the reaction phosphoenolpyruvate + UDP-N-acetyl-alpha-D-glucosamine = UDP-N-acetyl-3-O-(1-carboxyvinyl)-alpha-D-glucosamine + phosphate. It participates in cell wall biogenesis; peptidoglycan biosynthesis. Functionally, cell wall formation. Adds enolpyruvyl to UDP-N-acetylglucosamine. In Bacillus licheniformis (strain ATCC 14580 / DSM 13 / JCM 2505 / CCUG 7422 / NBRC 12200 / NCIMB 9375 / NCTC 10341 / NRRL NRS-1264 / Gibson 46), this protein is UDP-N-acetylglucosamine 1-carboxyvinyltransferase 1.